Consider the following 317-residue polypeptide: E3 ubiquitin-protein ligase NRDP1 (317 aa).

The RING-type; degenerate zinc finger occupies 18 to 57 (CPICSGVLEEPVQAPHCEHAFCNACITQWFSQQQTCPVDR). The SIAH-type; degenerate zinc-finger motif lies at 78–138 (KLQIACDNAV…LPNHNCIKHL (61 aa)).

In terms of assembly, interacts with USP8, ERBB3, PRKN and BIRC6. Interacts with CSF2RB, EPOR, IL3RA, MYD88 and TBK1. Interacts with Clec16a. In terms of processing, autoubiquitinated. Autoubiquitination leads to proteasomal degradation. Deubiquitinated by USP8 to get stabilized which induces apoptosis.

The catalysed reaction is S-ubiquitinyl-[E2 ubiquitin-conjugating enzyme]-L-cysteine + [acceptor protein]-L-lysine = [E2 ubiquitin-conjugating enzyme]-L-cysteine + N(6)-ubiquitinyl-[acceptor protein]-L-lysine.. It functions in the pathway protein modification; protein ubiquitination. Functionally, acts as E3 ubiquitin-protein ligase and regulates the degradation of target proteins. Polyubiquitinates MYD88. Negatively regulates MYD88-dependent production of pro-inflammatory cytokines. Can promote TRIF-dependent production of type I interferon and inhibits infection with vesicular stomatitis virus. Also promotes activation of TBK1 and IRF3. Involved in the ubiquitination of erythropoietin (EPO) and interleukin-3 (IL-3) receptors. Thus, through maintaining basal levels of cytokine receptors, RNF41 is involved in the control of hematopoietic progenitor cell differentiation into myeloerythroid lineages. Contributes to the maintenance of steady-state ERBB3 levels by mediating its growth factor-independent degradation. Involved in the degradation of the inhibitor of apoptosis BIRC6 and thus is an important regulator of cell death by promoting apoptosis. Also acts as a PRKN modifier that accelerates its degradation, resulting in a reduction of PRKN activity, influencing the balance of intracellular redox state. The RNF41-PRKN pathway regulates autophagosome-lysosome fusion during late mitophagy. Mitophagy is a selective form of autophagy necessary for mitochondrial quality control. The sequence is that of E3 ubiquitin-protein ligase NRDP1 (Rnf41) from Mus musculus (Mouse).